The chain runs to 594 residues: Actin-histidine N-methyltransferase (594 aa).

The interval 1–22 (MGKKSRVKTQKSGTGATATVSP) is disordered. Over residues 10-20 (QKSGTGATATV) the composition is skewed to polar residues. S-adenosyl-L-methionine-binding positions include R75, 104-106 (EGF), R254, 275-279 (DMCNH), and 325-327 (SGF). Positions 94-314 (EGFEMVNFKE…AGDQIYIFYG (221 aa)) constitute an SET domain. The interval 551–594 (GLVNGENLIPNGTRSENESLSPEESENVTGEESSGSMAKVKERL) is disordered.

The protein belongs to the class V-like SAM-binding methyltransferase superfamily. SETD3 actin-histidine methyltransferase family. As to quaternary structure, interacts with MYOD1. In terms of processing, phosphorylated by GSK3B, which is required for recognition by the SCF(FBXW7) complex and subsequent degradation. Post-translationally, ubiquitinated by the SCF(FBXW7) complex following phosphorylation by GSK3B, leading to its degradation by the proteasome. As to expression, prominently expressed in the heart and skeletal muscles and is also detected weakly in the stomach, small intestine, and colon.

Its subcellular location is the cytoplasm. The protein resides in the nucleus. The enzyme catalyses L-histidyl-[protein] + S-adenosyl-L-methionine = N(tele)-methyl-L-histidyl-[protein] + S-adenosyl-L-homocysteine + H(+). Its function is as follows. Protein-histidine N-methyltransferase that specifically mediates 3-methylhistidine (tele-methylhistidine) methylation of actin at 'His-73'. Histidine methylation of actin is required for smooth muscle contraction of the laboring uterus during delivery. Does not have protein-lysine N-methyltransferase activity and probably only catalyzes histidine methylation of actin. This Mus musculus (Mouse) protein is Actin-histidine N-methyltransferase.